A 342-amino-acid chain; its full sequence is Heat-inducible transcription repressor HrcA (342 aa).

Belongs to the HrcA family.

Its function is as follows. Negative regulator of class I heat shock genes (grpE-dnaK-dnaJ and groELS operons). Prevents heat-shock induction of these operons. This chain is Heat-inducible transcription repressor HrcA, found in Leptospira interrogans serogroup Icterohaemorrhagiae serovar copenhageni (strain Fiocruz L1-130).